The following is a 382-amino-acid chain: Mannitol-1-phosphate 5-dehydrogenase (382 aa).

3–14 (ALHFGAGNIGRG) contacts NAD(+).

Belongs to the mannitol dehydrogenase family.

It catalyses the reaction D-mannitol 1-phosphate + NAD(+) = beta-D-fructose 6-phosphate + NADH + H(+). The polypeptide is Mannitol-1-phosphate 5-dehydrogenase (Salmonella agona (strain SL483)).